Here is a 498-residue protein sequence, read N- to C-terminus: Isocitrate dehydrogenase [NADP], mitochondrial (498 aa).

Residues 164–166 (TIT) and arginine 171 contribute to the NADP(+) site. Residue threonine 166 participates in substrate binding. Residues 183–189 (SPNGTIR), arginine 198, and arginine 221 each bind substrate. Aspartate 339 is a Mn(2+) binding site. Position 347 (lysine 347) interacts with NADP(+). Residue aspartate 362 participates in Mn(2+) binding. NADP(+) contacts are provided by residues 397–402 (GTVTRH) and asparagine 415.

The protein belongs to the isocitrate and isopropylmalate dehydrogenases family. Mg(2+) is required as a cofactor. Requires Mn(2+) as cofactor.

It is found in the mitochondrion. The enzyme catalyses D-threo-isocitrate + NADP(+) = 2-oxoglutarate + CO2 + NADPH. The polypeptide is Isocitrate dehydrogenase [NADP], mitochondrial (icdA) (Aspergillus niger).